A 299-amino-acid chain; its full sequence is Probable lipid kinase YegS (299 aa).

The region spanning 2-133 is the DAGKc domain; that stretch reads AEFPASLLIL…IDMAQVNKQT (132 aa). ATP is bound by residues T40, 66–72, and T95; that span reads GDGTINE. Positions 215, 218, and 220 each coordinate Mg(2+). E271 (proton acceptor) is an active-site residue.

Belongs to the diacylglycerol/lipid kinase family. YegS lipid kinase subfamily. It depends on Mg(2+) as a cofactor. The cofactor is Ca(2+).

Its subcellular location is the cytoplasm. Its function is as follows. Probably phosphorylates lipids; the in vivo substrate is unknown. This chain is Probable lipid kinase YegS, found in Escherichia coli O45:K1 (strain S88 / ExPEC).